The following is a 686-amino-acid chain: U3 small nucleolar RNA-associated protein 4 homolog (686 aa).

14 WD repeats span residues 7 to 50, 51 to 92, 93 to 135, 136 to 181, 182 to 226, 227 to 275, 276 to 317, 318 to 377, 378 to 427, 428 to 475, 476 to 516, 517 to 566, 567 to 627, and 628 to 666; these read HRVR…ANYF, QEKF…QALN, IKYA…PDKI, QFER…AVHK, MIVD…SATG, TLVK…SSEK, QWVR…LMEK, VEVK…PLSK, NADH…NISL, KRVS…KHLH, AFQP…VKQL, KLHC…WSRT, VQKQ…FPPT, and NESD…AVER. Residue Lys-321 forms a Glycyl lysine isopeptide (Lys-Gly) (interchain with G-Cter in SUMO2) linkage.

In terms of assembly, interacts with HIVEP1 Interacts with NOL11. Part of the small subunit (SSU) processome, composed of more than 70 proteins and the RNA chaperone small nucleolar RNA (snoRNA) U3. May be a component of the proposed t-UTP subcomplex of the ribosomal small subunit (SSU) processome containing at least UTP4, WDR43, HEATR1, UTP15, WDR75. May be phosphorylated during mitosis; may control the association of this protein with WRD43 and UTP15.

It is found in the nucleus. It localises to the nucleolus. The protein localises to the chromosome. Its function is as follows. Ribosome biogenesis factor. Involved in nucleolar processing of pre-18S ribosomal RNA. Part of the small subunit (SSU) processome, first precursor of the small eukaryotic ribosomal subunit. During the assembly of the SSU processome in the nucleolus, many ribosome biogenesis factors, an RNA chaperone and ribosomal proteins associate with the nascent pre-rRNA and work in concert to generate RNA folding, modifications, rearrangements and cleavage as well as targeted d Involved in SSU pre-rRNA processing at sites A', A0, 1 and 2b. Required for optimal pre-ribosomal RNA transcription by RNA polymerase. May be a transcriptional regulator. In terms of biological role, (Microbial infection) Acts as a positive regulator of HIVEP1 which specifically binds to the DNA sequence 5'-GGGACTTTCC-3' found in enhancer elements of numerous viral promoters such as those of HIV-1, SV40, or CMV. The sequence is that of U3 small nucleolar RNA-associated protein 4 homolog from Homo sapiens (Human).